A 233-amino-acid polypeptide reads, in one-letter code: Probable GTP-binding protein EngB (233 aa).

An EngB-type G domain is found at 21–228 (GLPEVALVGR…WRWIREHVQD (208 aa)). Residues 29 to 36 (GRSNVGKS) and 56 to 60 (GRTQA) each bind GTP. Positions 36 and 58 each coordinate Mg(2+). The disordered stretch occupies residues 68–87 (PQGKPRPEGEPQPDKDAGRT). Residues 72–85 (PRPEGEPQPDKDAG) are compositionally biased toward basic and acidic residues. GTP is bound by residues 107 to 110 (DMPG), 174 to 177 (TKAD), and 207 to 209 (FSA).

The protein belongs to the TRAFAC class TrmE-Era-EngA-EngB-Septin-like GTPase superfamily. EngB GTPase family. Mg(2+) is required as a cofactor.

Necessary for normal cell division and for the maintenance of normal septation. The polypeptide is Probable GTP-binding protein EngB (Symbiobacterium thermophilum (strain DSM 24528 / JCM 14929 / IAM 14863 / T)).